Here is a 335-residue protein sequence, read N- to C-terminus: Probable UDP-N-acetylglucosamine pyrophosphorylase (335 aa).

The Substrate binding signature appears at 45 to 48 (LSGG). UTP contacts are provided by residues 45 to 48 (LSGG), Lys-59, Gln-120, and Gly-145. Residue Asn-146 participates in substrate binding. Asp-170 provides a ligand contact to UTP. A Substrate binding motif is present at residues 218-219 (EY). Residue Lys-278 coordinates UTP. Lys-308 serves as a coordination point for substrate.

It belongs to the UDPGP type 1 family.

The protein resides in the cytoplasm. The enzyme catalyses N-acetyl-alpha-D-glucosamine 1-phosphate + UTP + H(+) = UDP-N-acetyl-alpha-D-glucosamine + diphosphate. The protein operates within nucleotide-sugar biosynthesis; UDP-N-acetyl-alpha-D-glucosamine biosynthesis; UDP-N-acetyl-alpha-D-glucosamine from N-acetyl-alpha-D-glucosamine 1-phosphate: step 1/1. The polypeptide is Probable UDP-N-acetylglucosamine pyrophosphorylase (UAP1) (Encephalitozoon cuniculi (strain GB-M1) (Microsporidian parasite)).